We begin with the raw amino-acid sequence, 300 residues long: Probable protein phosphatase 2C 3 (300 aa).

The 276-residue stretch at 23–298 folds into the PPM-type phosphatase domain; it reads IFAASEMQGW…DNMTTILVYL (276 aa). Residues D57, G58, D237, and D289 each coordinate Mn(2+).

The protein belongs to the PP2C family. The cofactor is Mg(2+). It depends on Mn(2+) as a cofactor.

It localises to the membrane. It carries out the reaction O-phospho-L-seryl-[protein] + H2O = L-seryl-[protein] + phosphate. The catalysed reaction is O-phospho-L-threonyl-[protein] + H2O = L-threonyl-[protein] + phosphate. Its function is as follows. Enzyme with a broad specificity. The chain is Probable protein phosphatase 2C 3 from Paramecium tetraurelia.